We begin with the raw amino-acid sequence, 348 residues long: Phenylalanine--tRNA ligase alpha subunit (348 aa).

Glu259 serves as a coordination point for Mg(2+).

It belongs to the class-II aminoacyl-tRNA synthetase family. Phe-tRNA synthetase alpha subunit type 1 subfamily. In terms of assembly, tetramer of two alpha and two beta subunits. The cofactor is Mg(2+).

It localises to the cytoplasm. The catalysed reaction is tRNA(Phe) + L-phenylalanine + ATP = L-phenylalanyl-tRNA(Phe) + AMP + diphosphate + H(+). The polypeptide is Phenylalanine--tRNA ligase alpha subunit (Enterococcus faecalis (strain ATCC 700802 / V583)).